The following is a 161-amino-acid chain: RNA pyrophosphohydrolase (161 aa).

The Nudix hydrolase domain maps to 12–154 (PYRIGVGMVI…KRKLYKAVIN (143 aa)). The short motif at 46–67 (GGIILGETYSKAVLREMKEEIG) is the Nudix box element.

Belongs to the Nudix hydrolase family. RppH subfamily. A divalent metal cation serves as cofactor.

Its function is as follows. Accelerates the degradation of transcripts by removing pyrophosphate from the 5'-end of triphosphorylated RNA, leading to a more labile monophosphorylated state that can stimulate subsequent ribonuclease cleavage. The chain is RNA pyrophosphohydrolase from Orientia tsutsugamushi (strain Boryong) (Rickettsia tsutsugamushi).